Here is a 158-residue protein sequence, read N- to C-terminus: Ribosome maturation factor RimP (158 aa).

The protein belongs to the RimP family.

The protein localises to the cytoplasm. Functionally, required for maturation of 30S ribosomal subunits. The polypeptide is Ribosome maturation factor RimP (Pediococcus pentosaceus (strain ATCC 25745 / CCUG 21536 / LMG 10740 / 183-1w)).